The sequence spans 157 residues: Probable calcium-binding protein CML15 (157 aa).

4 EF-hand domains span residues 3 to 38 (DQIR…LGLK), 39 to 74 (PSGD…DLNE), 78 to 113 (INSE…MGQP), and 114 to 149 (LTYK…SAVD). Residues Asp-16, Asp-18, Asp-20, Ser-22, Glu-27, Asp-52, Asn-54, Asn-56, Glu-63, Asp-91, Asp-93, Asn-95, Glu-102, Asp-127, Asn-129, Asp-131, and Glu-138 each contribute to the Ca(2+) site.

Potential calcium sensor. In Arabidopsis thaliana (Mouse-ear cress), this protein is Probable calcium-binding protein CML15 (CML15).